The chain runs to 293 residues: Ribosomal RNA small subunit methyltransferase A (293 aa).

Residues N33, V35, G60, E81, D111, and N130 each contribute to the S-adenosyl-L-methionine site.

The protein belongs to the class I-like SAM-binding methyltransferase superfamily. rRNA adenine N(6)-methyltransferase family. RsmA subfamily.

It localises to the cytoplasm. The catalysed reaction is adenosine(1518)/adenosine(1519) in 16S rRNA + 4 S-adenosyl-L-methionine = N(6)-dimethyladenosine(1518)/N(6)-dimethyladenosine(1519) in 16S rRNA + 4 S-adenosyl-L-homocysteine + 4 H(+). Functionally, specifically dimethylates two adjacent adenosines (A1518 and A1519) in the loop of a conserved hairpin near the 3'-end of 16S rRNA in the 30S particle. May play a critical role in biogenesis of 30S subunits. This is Ribosomal RNA small subunit methyltransferase A from Corynebacterium glutamicum (strain R).